A 353-amino-acid chain; its full sequence is UPF0283 membrane protein YcjF (353 aa).

The segment covering Met1–Pro19 has biased composition (basic and acidic residues). The tract at residues Met1–Arg35 is disordered. A run of 3 helical transmembrane segments spans residues Met70 to Thr90, Val100 to Val120, and Glu213 to Trp233.

It belongs to the UPF0283 family.

It is found in the cell inner membrane. This Salmonella paratyphi A (strain AKU_12601) protein is UPF0283 membrane protein YcjF.